Here is a 1082-residue protein sequence, read N- to C-terminus: Integrator complex subunit 3 homolog (1082 aa).

Disordered regions lie at residues 483–563, 923–945, and 1005–1082; these read PGPP…VSDD, YPSNSPNKRKRPSKSAQQNTAPT, and DETS…SDSD. Composition is skewed to low complexity over residues 517 to 528 and 542 to 555; these read PAAKAASTAASA and TKPATTTTTTTTTT. Positions 936 to 945 are enriched in polar residues; it reads KSAQQNTAPT. Composition is skewed to low complexity over residues 1008–1018 and 1033–1056; these read STTVGRRGTSS and EKAAAAAAAAHANNSKKAAEASAK.

This sequence belongs to the Integrator subunit 3 family. As to quaternary structure, belongs to the multiprotein complex Integrator. The core complex associates with protein phosphatase 2A subunits, to form the Integrator-PP2A (INTAC) complex.

The protein localises to the nucleus. The protein resides in the cytoplasm. Its function is as follows. Component of the integrator complex, a multiprotein complex that terminates RNA polymerase II (Pol II) transcription in the promoter-proximal region of genes. The integrator complex provides a quality checkpoint during transcription elongation by driving premature transcription termination of transcripts that are unfavorably configured for transcriptional elongation: the complex terminates transcription by (1) catalyzing dephosphorylation of the C-terminal domain (CTD) of Pol II subunit Polr2A/Rbp1 and Spt5, and (2) degrading the exiting nascent RNA transcript via endonuclease activity. The integrator complex is also involved in the 3'-end processing of the U7 snRNA, and also the spliceosomal snRNAs U1, U2, U4 and U5. This Anopheles gambiae (African malaria mosquito) protein is Integrator complex subunit 3 homolog.